The chain runs to 1538 residues: Myosin-9 (1538 aa).

Positions 16 to 65 (SIGSHVWFEDPEVAWIDGEVEKINGQEVVIQATTGKKVTAKLSKIYPKDV) constitute a Myosin N-terminal SH3-like domain. Positions 70-740 (GGVDDMTKLS…QMAELDARRA (671 aa)) constitute a Myosin motor domain. ATP contacts are provided by residues 164–171 (GESGAGKT) and 217–225 (NNNSSRFGK). Actin-binding regions lie at residues 503–537 (LIEKKPGGIVALLDEACMFPKSTHETFANKLYQTF), 539–562 (THKRFIKPKLSRTDFAVAHYAGEV), 597–621 (FPPLPEETSKSSKFSSIGSRFKLQL), and 621–643 (LQQLMETLNCTEPHYIRCVKPNN). 6 consecutive IQ domains span residues 743-772 (LSSAAKKIQRRIRTHQAQKRFIVLRKATIS), 766-795 (LRKATISLQAICRGRLSCKHYDNLRREAAA), 791-820 (REAAAVKIQKNGRRHYSRKSYKKLHVASLV), 814-843 (LHVASLVVQTGLRAMAARKQFRFRKQTKAA), 839-868 (QTKAATIVQAQWRCHRAISYYKKLKNGVVL), and 862-891 (LKNGVVLSQTRWRGRLAKRELRKLKMAARE). Residues 892–1064 (TGALKEAKDM…VLRQQAVSMA (173 aa)) are a coiled coil. The span at 1017 to 1032 (SLEDKKKKLEETEKKG) shows a compositional bias: basic and acidic residues. 2 disordered regions span residues 1017–1041 (SLEDKKKKLEETEKKGQQLQESLTR) and 1098–1121 (SHSINHRDPSEVEDKPQKSLNEKQ). The region spanning 1168–1481 (DRIIQTIGHA…IANMRVLMTE (314 aa)) is the Dilute domain.

Belongs to the TRAFAC class myosin-kinesin ATPase superfamily. Myosin family. Plant myosin class XI subfamily. As to quaternary structure, homodimer.

Myosin heavy chain that is required for the cell cycle-regulated transport of various organelles and proteins for their segregation. Functions by binding with its tail domain to receptor proteins on organelles and exerting force with its N-terminal motor domain against actin filaments, thereby transporting its cargo along polarized actin cables. Involved in trafficking of Golgi stacks and mitochondria. This Arabidopsis thaliana (Mouse-ear cress) protein is Myosin-9 (XI-C).